Reading from the N-terminus, the 205-residue chain is GTP cyclohydrolase-2 (205 aa).

49–53 is a binding site for GTP; it reads RLHSE. Residues Cys54, Cys65, and Cys67 each coordinate Zn(2+). Residues Gln70, 92–94, and Thr114 contribute to the GTP site; that span reads EGR. The active-site Proton acceptor is the Asp126. The active-site Nucleophile is the Arg128. The GTP site is built by Thr149 and Lys154.

This sequence belongs to the GTP cyclohydrolase II family. The cofactor is Zn(2+).

It carries out the reaction GTP + 4 H2O = 2,5-diamino-6-hydroxy-4-(5-phosphoribosylamino)-pyrimidine + formate + 2 phosphate + 3 H(+). It functions in the pathway cofactor biosynthesis; riboflavin biosynthesis; 5-amino-6-(D-ribitylamino)uracil from GTP: step 1/4. Functionally, catalyzes the conversion of GTP to 2,5-diamino-6-ribosylamino-4(3H)-pyrimidinone 5'-phosphate (DARP), formate and pyrophosphate. In Pseudomonas aeruginosa (strain LESB58), this protein is GTP cyclohydrolase-2.